We begin with the raw amino-acid sequence, 133 residues long: Serine/threonine-protein kinase RsbT (133 aa).

It catalyses the reaction L-seryl-[protein] + ATP = O-phospho-L-seryl-[protein] + ADP + H(+). The catalysed reaction is L-threonyl-[protein] + ATP = O-phospho-L-threonyl-[protein] + ADP + H(+). Its function is as follows. Provides the crucial link between the upstream module (communication of environmental stress) and the downstream module (integration of the environmental signals with signals of energy stress) that compose the signal transduction pathway controlling the sigma-B factor. Phosphorylates and inactivates its specific antagonist protein RsbS thanks to its serine kinase activity. Upon phosphorylation of RsbS, RsbT is released to stimulate RsbU, a PP2C phosphatase, thereby initiating the signaling cascade that ultimately activates sigma-B. The activity of the RsbU phosphatase may be stimulated by a long-lived interaction with RsbT and the serine kinase function of RsbT is not required to directly modify RsbU. Also phosphorylates RsbR thanks to its threonine kinase activity, preventing it to phosphorylate RsbT. The protein is Serine/threonine-protein kinase RsbT (rsbT) of Bacillus subtilis (strain 168).